A 284-amino-acid polypeptide reads, in one-letter code: Tropomyosin (284 aa).

Residues 1-284 (MDAIKKKMLM…DQALNELHNM (284 aa)) are a coiled coil. Disordered regions lie at residues 106-134 (LNSTVEKLTDSEKAADESERARKVLENRQ) and 186-221 (AETKARELEDELKTTTGQLKSMEAQATKASEKEEAY). Basic and acidic residues-rich tracts occupy residues 112-134 (KLTDSEKAADESERARKVLENRQ) and 186-198 (AETKARELEDELK).

It belongs to the tropomyosin family. In terms of assembly, homodimer.

Its function is as follows. Tropomyosin, in association with the troponin complex, plays a central role in the calcium dependent regulation of muscle contraction. In Branchiostoma belcheri (Amphioxus), this protein is Tropomyosin (TPM).